The following is a 178-amino-acid chain: MNATPEKADDLIVVGKIFSVHGVRGEVKVYSFTDPIENLLDYPRWTLRHEGKVKQVELVSGRGSQKGLVVKLKGLDDRDEARLLSGFEICIPRSLLPNLAADEYYWYQLQGLKVINQDEQLFGKVDHLLETGANDVMVVKPCAGSLDDRERLLPYTAQCVLAIDLEAGVMRVEWDADF.

In terms of domain architecture, PRC barrel spans 100–178; the sequence is AADEYYWYQL…VMRVEWDADF (79 aa).

The protein belongs to the RimM family. In terms of assembly, binds ribosomal protein uS19.

It is found in the cytoplasm. Functionally, an accessory protein needed during the final step in the assembly of 30S ribosomal subunit, possibly for assembly of the head region. Essential for efficient processing of 16S rRNA. May be needed both before and after RbfA during the maturation of 16S rRNA. It has affinity for free ribosomal 30S subunits but not for 70S ribosomes. The protein is Ribosome maturation factor RimM of Pseudomonas putida (strain W619).